We begin with the raw amino-acid sequence, 305 residues long: MARVTCDPVVQRRVASTASLRAWAVESAQGVEGSCYANLPAGVRTSEMNCHHLLNHLHEKGHLGVAAALQVLRGADEDRHVFDAGRLAPGQHALHVFGTVSMADAWVGHAHLAGPSAVSVHDQADVLGQRPRCRLPPQPTGVQGVEEVGGAHRETFRMVSRADRSSWCTAEVGSSRSPAASVVLPGGTRPGTCAVGVRRFTATEYYVSRTTCCVASWERIPKVDHTWRSHAHQRRPDARAVRTGRRAAARVRHQRCHRAGLRSPPRTREPLWSLGPSGGEAAGEAPGGKGPPTPVLPHARRAGAA.

The disordered stretch occupies residues 255-305 (RCHRAGLRSPPRTREPLWSLGPSGGEAAGEAPGGKGPPTPVLPHARRAGAA). The span at 276–288 (PSGGEAAGEAPGG) shows a compositional bias: gly residues.

This is an uncharacterized protein from Streptomyces fradiae (Streptomyces roseoflavus).